Reading from the N-terminus, the 457-residue chain is Protein translocase subunit SecY (457 aa).

The Cytoplasmic portion of the chain corresponds to Met1–Pro20. The chain crosses the membrane as a helical span at residues Glu21–Pro47. At Leu48 to Gln59 the chain is on the extracellular side. The helical intramembrane region spans Val60–Phe67. Residues Val60–Ile88 traverse the membrane as a discontinuously helical segment. Residues Ala68–Ile79 lie within the membrane without spanning it. The segment at residues Gly80–Ile88 is an intramembrane region (helical). Residues Ile89–Arg109 are Cytoplasmic-facing. A helical transmembrane segment spans residues Lys110 to Gly134. Topologically, residues Arg135–Pro146 are extracellular. The helical transmembrane segment at Leu147–Gln171 threads the bilayer. The Cytoplasmic portion of the chain corresponds to Lys172–Ser178. The chain crosses the membrane as a helical span at residues Ala179 to Phe197. Residues Gly198–Pro229 lie on the Extracellular side of the membrane. Residues Asp230–Arg251 traverse the membrane as a helical segment. Residues Val252–Thr276 are Cytoplasmic-facing. Residues Asn277–Ala298 form a helical membrane-spanning segment. Residues Asp299–Val332 lie on the Extracellular side of the membrane. The helical transmembrane segment at Lys333–Trp352 threads the bilayer. At Val353 to Leu395 the chain is on the cytoplasmic side. A helical membrane pass occupies residues Thr396 to Gly414. Residues Ala415–Gly417 lie on the Extracellular side of the membrane. Residues Thr418–Tyr432 form a helical membrane-spanning segment. Residues Tyr433–Val457 lie on the Cytoplasmic side of the membrane.

The protein belongs to the SecY/SEC61-alpha family. As to quaternary structure, component of the Sec protein translocase complex. Heterotrimer consisting of alpha (SecY), beta (SecG) and gamma (SecE) subunits. The heterotrimers can form oligomers, although 1 heterotrimer is thought to be able to translocate proteins. Interacts with the ribosome. May interact with SecDF, and other proteins may be involved.

It localises to the cell membrane. In terms of biological role, the central subunit of the protein translocation channel SecYEG. Consists of two halves formed by TMs 1-5 and 6-10. These two domains form a lateral gate at the front which open onto the bilayer between TMs 2 and 7, and are clamped together by SecE at the back. The channel is closed by both a pore ring composed of hydrophobic SecY resides and a short helix (helix 2A) on the extracellular side of the membrane which forms a plug. The plug probably moves laterally to allow the channel to open. The ring and the pore may move independently. The protein is Protein translocase subunit SecY of Aeropyrum pernix (strain ATCC 700893 / DSM 11879 / JCM 9820 / NBRC 100138 / K1).